Here is a 1167-residue protein sequence, read N- to C-terminus: mRNA 3'-end-processing protein rna-14 (1167 aa).

The disordered stretch occupies residues 1–245 (MSDDYDPTNI…DPTPVTQPAP (245 aa)). 2 stretches are compositionally biased toward acidic residues: residues 16–26 (EEQEDYGEADG) and 70–79 (NTDDVGDDYD). Residues 102–111 (TAPQPAAPVA) show a composition bias toward low complexity. The segment covering 124–137 (DSDDEDEDGDDDGE) has biased composition (acidic residues). 2 stretches are compositionally biased toward low complexity: residues 138–150 (PQQQ…QQQP) and 159–191 (GSGA…PQTA). Residues 192 to 218 (TLTVQDNAGATTFNAPPVPQQVSHQSG) show a composition bias toward polar residues. A compositionally biased stretch (low complexity) spans 219–245 (ATTAAVPTTPSSAAPAVDPTPVTQPAP). HAT repeat units follow at residues 277–309 (NDID…LELS), 311–342 (NNFP…YIRR), 352–387 (QARQ…FIKF), 401–434 (QKMD…FEMG), 471–504 (TNLP…WEKS), and 518–550 (LYQK…WCFD). Residues 882–893 (QQQPQLPMSQRD) are compositionally biased toward polar residues. 2 disordered regions span residues 882–980 (QQQP…SGAG) and 1075–1167 (AYRE…PPPY). Residues 908–922 (SPSAGPGAPFAPYAA) show a composition bias toward low complexity. Residues 924–946 (RPLDDRDYDDHPRKIARSEHDPF) show a composition bias toward basic and acidic residues. A compositionally biased stretch (gly residues) spans 969-979 (GAAGAYSGSGA). Low complexity predominate over residues 1079 to 1090 (SPGPLGGRPLSP). Residues 1121 to 1134 (EPPPAAQYGVPPPA) show a composition bias toward pro residues. Over residues 1135 to 1151 (QYDGGWAQQQQQQQYGQ) the composition is skewed to low complexity.

It is found in the nucleus. Its subcellular location is the cytoplasm. In terms of biological role, component of the cleavage factor IA (CFIA) complex, which is involved in the endonucleolytic cleavage during polyadenylation-dependent pre-mRNA 3'-end formation. This Neurospora crassa (strain ATCC 24698 / 74-OR23-1A / CBS 708.71 / DSM 1257 / FGSC 987) protein is mRNA 3'-end-processing protein rna-14 (rna-14).